The sequence spans 335 residues: tRNA (guanine(6)-N2)-methyltransferase (335 aa).

A THUMP domain is found at 47–150 (EALGLRLAHH…GEEAFLGVQL (104 aa)). Residues 195–197 (SGT), 243–244 (DA), and asparagine 260 each bind S-adenosyl-L-methionine.

The protein belongs to the methyltransferase superfamily. As to quaternary structure, monomer in solution.

It localises to the cytoplasm. It carries out the reaction guanosine(6) in tRNA + S-adenosyl-L-methionine = N(2)-methylguanosine(6) in tRNA + S-adenosyl-L-homocysteine + H(+). Functionally, S-adenosyl-L-methionine-dependent methyltransferase that catalyzes the methylation of the guanosine nucleotide at position 6 (m2G6) in tRNA(Phe). The polypeptide is tRNA (guanine(6)-N2)-methyltransferase (Thermus thermophilus (strain ATCC BAA-163 / DSM 7039 / HB27)).